We begin with the raw amino-acid sequence, 281 residues long: NADPH-dependent 7-cyano-7-deazaguanine reductase (281 aa).

81–83 contacts substrate; that stretch reads IES. 83 to 84 lines the NADPH pocket; the sequence is SK. Cysteine 188 functions as the Thioimide intermediate in the catalytic mechanism. Residue aspartate 195 is the Proton donor of the active site. 227 to 228 provides a ligand contact to substrate; that stretch reads HE. 256-257 provides a ligand contact to NADPH; the sequence is RG.

It belongs to the GTP cyclohydrolase I family. QueF type 2 subfamily. As to quaternary structure, homodimer.

It localises to the cytoplasm. The catalysed reaction is 7-aminomethyl-7-carbaguanine + 2 NADP(+) = 7-cyano-7-deazaguanine + 2 NADPH + 3 H(+). It functions in the pathway tRNA modification; tRNA-queuosine biosynthesis. Functionally, catalyzes the NADPH-dependent reduction of 7-cyano-7-deazaguanine (preQ0) to 7-aminomethyl-7-deazaguanine (preQ1). The chain is NADPH-dependent 7-cyano-7-deazaguanine reductase from Paracidovorax citrulli (strain AAC00-1) (Acidovorax citrulli).